We begin with the raw amino-acid sequence, 364 residues long: MSLYRKRLKIVRGEGIYVWDSEGKRYLDLIAGIGVAILGHNHPKWVEEVGNQLNKLVVAGPMFEHEEKEEMLEELSRWVNFEYVYMGNSGTEAVEAALKFARLYTGRKEIIAMTNAFHGRTMGALSATWKSKYKKDFEPLVPGFKHIPFNDVEAAKEAITRTTAAVIFEPIQGESGIIPAKEEFVKTLRDLTEDVGALLIADEVQSGLRTGKFLAVEHYKVEPDIVTLGKGIGNGVPVSLTLTNFDVERGKHGSTFGGNPLACKAVAVTLRILRKERLVEKASEKFIKVKGKDVVTTRGRGLMIGIVLKKPVGRYVEELQNEGYLVHTSGQRVIRLLPPLIISKEKMMEVKSAIEGVINGDTEG.

Pyridoxal 5'-phosphate-binding positions include 90–91 (GT) and Phe-117. A substrate-binding site is contributed by Arg-120. 202-205 (DEVQ) provides a ligand contact to pyridoxal 5'-phosphate. The residue at position 230 (Lys-230) is an N6-(pyridoxal phosphate)lysine. Ser-254 is a binding site for substrate. Thr-255 serves as a coordination point for pyridoxal 5'-phosphate.

This sequence belongs to the class-III pyridoxal-phosphate-dependent aminotransferase family. LysJ subfamily. In terms of assembly, homodimer. Pyridoxal 5'-phosphate serves as cofactor.

Its subcellular location is the cytoplasm. It carries out the reaction [amino-group carrier protein]-C-terminal-gamma-(L-lysyl)-L-glutamate + 2-oxoglutarate = [amino-group carrier protein]-C-terminal-N-(1-carboxy-5-oxopentan-1-yl)-L-glutamine + L-glutamate. The enzyme catalyses [amino-group carrier protein]-C-terminal-gamma-(L-ornithyl)-L-glutamate + 2-oxoglutarate = [amino-group carrier protein]-C-terminal-gamma-(L-glutamyl-5-semialdehyde)-L-glutamate + L-glutamate. The protein operates within amino-acid biosynthesis; L-lysine biosynthesis via AAA pathway; L-lysine from L-alpha-aminoadipate (Thermus route): step 4/5. Its pathway is amino-acid biosynthesis; L-arginine biosynthesis. Functionally, involved in both the arginine and lysine biosynthetic pathways. The protein is Putative [LysW]-aminoadipate semialdehyde/glutamate semialdehyde transaminase of Pyrococcus abyssi (strain GE5 / Orsay).